Here is a 426-residue protein sequence, read N- to C-terminus: Enolase (426 aa).

Glutamine 163 lines the (2R)-2-phosphoglycerate pocket. The active-site Proton donor is glutamate 205. The Mg(2+) site is built by aspartate 242, glutamate 285, and aspartate 312. Residues lysine 337, arginine 366, serine 367, and lysine 388 each coordinate (2R)-2-phosphoglycerate. Catalysis depends on lysine 337, which acts as the Proton acceptor.

It belongs to the enolase family. As to quaternary structure, component of the RNA degradosome, a multiprotein complex involved in RNA processing and mRNA degradation. Requires Mg(2+) as cofactor.

It localises to the cytoplasm. It is found in the secreted. Its subcellular location is the cell surface. The enzyme catalyses (2R)-2-phosphoglycerate = phosphoenolpyruvate + H2O. The protein operates within carbohydrate degradation; glycolysis; pyruvate from D-glyceraldehyde 3-phosphate: step 4/5. In terms of biological role, catalyzes the reversible conversion of 2-phosphoglycerate (2-PG) into phosphoenolpyruvate (PEP). It is essential for the degradation of carbohydrates via glycolysis. The polypeptide is Enolase (Nitrosococcus oceani (strain ATCC 19707 / BCRC 17464 / JCM 30415 / NCIMB 11848 / C-107)).